We begin with the raw amino-acid sequence, 261 residues long: Phosphonates import ATP-binding protein PhnC (261 aa).

The region spanning 9-253 is the ABC transporter domain; sequence IQLKDVSKIY…VFDDIYNGGN (245 aa). ATP is bound at residue 42 to 49; that stretch reads GLSGAGKS.

Belongs to the ABC transporter superfamily. Phosphonates importer (TC 3.A.1.9.1) family. As to quaternary structure, the complex is composed of two ATP-binding proteins (PhnC), two transmembrane proteins (PhnE) and a solute-binding protein (PhnD).

It is found in the cell membrane. The catalysed reaction is phosphonate(out) + ATP + H2O = phosphonate(in) + ADP + phosphate + H(+). In terms of biological role, part of the ABC transporter complex PhnCDE involved in phosphonates import. Responsible for energy coupling to the transport system. This Lactobacillus gasseri (strain ATCC 33323 / DSM 20243 / BCRC 14619 / CIP 102991 / JCM 1131 / KCTC 3163 / NCIMB 11718 / NCTC 13722 / AM63) protein is Phosphonates import ATP-binding protein PhnC.